The chain runs to 237 residues: MNINPFANVSLQDYLEIVQIVDSTFPIGSFNHSFGMENYLREDTVTDDKGYEEWQEAYLASQFKYGEGLVIKLVYDAMVTDNIDQVWYYDKVLTVSTQARETRQGTKMIAKQMLRLIQRLHAIPVLDDYQSKIRKGVAFGNPAIVFALYVFNKGLGCNEAIALYGYSVISTMVQNAVRAIPLGQFAGQEIVLRSFSQLEKMTQEIQELDASYLGANTPGLELAQMKHETQVFRLFMS.

Belongs to the UreF family. As to quaternary structure, ureD, UreF and UreG form a complex that acts as a GTP-hydrolysis-dependent molecular chaperone, activating the urease apoprotein by helping to assemble the nickel containing metallocenter of UreC. The UreE protein probably delivers the nickel.

The protein localises to the cytoplasm. In terms of biological role, required for maturation of urease via the functional incorporation of the urease nickel metallocenter. This Streptococcus thermophilus (strain ATCC BAA-250 / LMG 18311) protein is Urease accessory protein UreF.